We begin with the raw amino-acid sequence, 20 residues long: Cytochrome P450 3A5 (20 aa).

It belongs to the cytochrome P450 family. Heme is required as a cofactor.

It localises to the endoplasmic reticulum membrane. Its subcellular location is the microsome membrane. It catalyses the reaction an organic molecule + reduced [NADPH--hemoprotein reductase] + O2 = an alcohol + oxidized [NADPH--hemoprotein reductase] + H2O + H(+). Functionally, 6-beta-testosterone hydroxylase. The chain is Cytochrome P450 3A5 from Papio sp. (Baboon).